The chain runs to 625 residues: MDIIGRAKKELAEYVAAQLGISEEEVFKNITYPPREELGDLSLALPSLIKGNINEKAKLLQEYKGELIERIEVAGIYLNARLNLRNIFVSIFSKLDDSYGLEKIEKPKRIVVEHTSANPIHPLHIGHLRNTILGDALARALKARGHSVNVRFYVNDTGRQVAVLIYGLKLLGFPDPEPNVKKDLWLGIIYAMTNVILEIRKLREELKKLSESEYREKVRELDELIVIANDLRNRNEVLFDKLADAINAKEEPEKEIGEIIKKYEEGNDELKGIIRKYISYALEGFSETLSKLNIRFDNFDYESDLLWENMVNEVLKALLSSSAKIPYKGVIALDLDSFLGDEARSKLRIPKGLKIPPLVLMRSDGTTLYTVRDIAYTIFKFNQFNADFVINVIAEEQYIPQIQLRGALELLGYSRFAENLLHYSYGMVNIQGLRMSGRLGKIITIDEIYEKLDNIVRNKLKEKGGNMENIDDIANAALRYAILSVSANKPLSFDLNRITSFEQNSGPYLQYTYARAANILAKSTENLSMDKVDFSDLVGDKRNILILIAKFPEVFKNAVDNLRLEDLVAFLRELSDIFNSWYDKERVLQEQDPRKRMLRLYIVKGVSVVLKNGLSVLGIRSLERM.

Positions Ala117 to His127 match the 'HIGH' region motif.

The protein belongs to the class-I aminoacyl-tRNA synthetase family.

Its subcellular location is the cytoplasm. The enzyme catalyses tRNA(Arg) + L-arginine + ATP = L-arginyl-tRNA(Arg) + AMP + diphosphate. This chain is Arginine--tRNA ligase, found in Saccharolobus solfataricus (strain ATCC 35092 / DSM 1617 / JCM 11322 / P2) (Sulfolobus solfataricus).